The chain runs to 130 residues: Small ribosomal subunit protein uS8 (130 aa).

Belongs to the universal ribosomal protein uS8 family. Part of the 30S ribosomal subunit. Contacts proteins S5 and S12.

Functionally, one of the primary rRNA binding proteins, it binds directly to 16S rRNA central domain where it helps coordinate assembly of the platform of the 30S subunit. This is Small ribosomal subunit protein uS8 from Hahella chejuensis (strain KCTC 2396).